The sequence spans 520 residues: MSLKEEVESRKTFAIISHPDAGKTTLTEKLLYFSGAIREAGTVKGKKTGKFATSDWMKVEQERGISVTSSVMQFDYDDYKINILDTPGHEDFSEDTYRTLMAVDSAVMVIDCAKGIEPQTLKLFKVCRMRGIPIFTFINKLDRVGKEPFELLDEIEETLNIDTYPMNWPIGMGQNFFGIIDRDSKSIEPFRDEENVLHLNDDYELQEEHAIRNDSAFAQAIEEFMLVKEAGEEFDNDALLNGELTPVFFGSALANFGVQNFLNAYVDHAPMPNARQTNEEVEVSPFDDEFSGFIFKIQANMDPKHRDRIAFMRVVSGAFERGMDVTLQRTSKKQKITRSTSFMADDKETVNHAVAGDIIGLYDTGNYQIGDTLVGGKQKYSFQDLPQFTPEIFMKVSAKNVMKQKHFHKGIEQLVQEGAIQYYKTLHTNQIILGAVGQLQFEVFEHRMKNEYNVDVVMEPVGRKIARWIENEDDIQDKMNTSRSILVKDRYDNFVFLFENEFATRWFEEKFPEIKLYSLL.

The 270-residue stretch at 8–277 folds into the tr-type G domain; the sequence is ESRKTFAIIS…HAPMPNARQT (270 aa). GTP-binding positions include 17-24, 85-89, and 139-142; these read SHPDAGKT, DTPGH, and NKLD.

The protein belongs to the TRAFAC class translation factor GTPase superfamily. Classic translation factor GTPase family. PrfC subfamily.

Its subcellular location is the cytoplasm. Increases the formation of ribosomal termination complexes and stimulates activities of RF-1 and RF-2. It binds guanine nucleotides and has strong preference for UGA stop codons. It may interact directly with the ribosome. The stimulation of RF-1 and RF-2 is significantly reduced by GTP and GDP, but not by GMP. This is Peptide chain release factor 3 from Staphylococcus haemolyticus (strain JCSC1435).